A 328-amino-acid polypeptide reads, in one-letter code: 4-hydroxy-3-methylbut-2-enyl diphosphate reductase (328 aa).

Cys-24 lines the [4Fe-4S] cluster pocket. Residues His-55 and His-88 each contribute to the (2E)-4-hydroxy-3-methylbut-2-enyl diphosphate site. 2 residues coordinate dimethylallyl diphosphate: His-55 and His-88. 2 residues coordinate isopentenyl diphosphate: His-55 and His-88. Cys-110 is a binding site for [4Fe-4S] cluster. Residue His-138 participates in (2E)-4-hydroxy-3-methylbut-2-enyl diphosphate binding. Residue His-138 coordinates dimethylallyl diphosphate. Residue His-138 coordinates isopentenyl diphosphate. The active-site Proton donor is Glu-140. Thr-178 contacts (2E)-4-hydroxy-3-methylbut-2-enyl diphosphate. [4Fe-4S] cluster is bound at residue Cys-208. Residues Ser-236, Ser-237, Asn-238, and Ser-279 each contribute to the (2E)-4-hydroxy-3-methylbut-2-enyl diphosphate site. Dimethylallyl diphosphate is bound by residues Ser-236, Ser-237, Asn-238, and Ser-279. Ser-236, Ser-237, Asn-238, and Ser-279 together coordinate isopentenyl diphosphate.

This sequence belongs to the IspH family. Requires [4Fe-4S] cluster as cofactor.

It catalyses the reaction isopentenyl diphosphate + 2 oxidized [2Fe-2S]-[ferredoxin] + H2O = (2E)-4-hydroxy-3-methylbut-2-enyl diphosphate + 2 reduced [2Fe-2S]-[ferredoxin] + 2 H(+). The enzyme catalyses dimethylallyl diphosphate + 2 oxidized [2Fe-2S]-[ferredoxin] + H2O = (2E)-4-hydroxy-3-methylbut-2-enyl diphosphate + 2 reduced [2Fe-2S]-[ferredoxin] + 2 H(+). The protein operates within isoprenoid biosynthesis; dimethylallyl diphosphate biosynthesis; dimethylallyl diphosphate from (2E)-4-hydroxy-3-methylbutenyl diphosphate: step 1/1. Its pathway is isoprenoid biosynthesis; isopentenyl diphosphate biosynthesis via DXP pathway; isopentenyl diphosphate from 1-deoxy-D-xylulose 5-phosphate: step 6/6. Its function is as follows. Catalyzes the conversion of 1-hydroxy-2-methyl-2-(E)-butenyl 4-diphosphate (HMBPP) into a mixture of isopentenyl diphosphate (IPP) and dimethylallyl diphosphate (DMAPP). Acts in the terminal step of the DOXP/MEP pathway for isoprenoid precursor biosynthesis. The polypeptide is 4-hydroxy-3-methylbut-2-enyl diphosphate reductase (Ehrlichia ruminantium (strain Gardel)).